Reading from the N-terminus, the 417-residue chain is Serine/threonine-protein phosphatase 4 regulatory subunit 2 (417 aa).

Composition is skewed to polar residues over residues 140–149 (EKNNSNSLNR), 158–170 (NSPS…NING), and 186–196 (APMTTNGLPES). A disordered region spans residues 140 to 417 (EKNNSNSLNR…EVTDEPMEQD (278 aa)). Ser-159 carries the phosphoserine modification. Residues 197–213 (TDSKEANLQQNEEKNHS) show a composition bias toward basic and acidic residues. Residues 214 to 226 (DSSTSESEVSSVS) are compositionally biased toward low complexity. Ser-226 carries the phosphoserine modification. Basic and acidic residues predominate over residues 231 to 258 (KHPDEDAVEAEGHEVKRLRFDKEGEVRE). Polar residues predominate over residues 259 to 269 (TASQTTSSEIS). The span at 283–297 (QDKDKDSRCTRQHCT) shows a compositional bias: basic and acidic residues. Acidic residues predominate over residues 298–311 (EEDEEEDEEEEEES). Positions 318 to 327 (MIPERKNQEK) are enriched in basic and acidic residues. Over residues 338–350 (ETSEENNQMEESD) the composition is skewed to acidic residues. Positions 353 to 363 (QAEKDLLHSEG) are enriched in basic and acidic residues. The span at 366-375 (NEGPVSSSSS) shows a compositional bias: low complexity. A compositionally biased stretch (polar residues) spans 385 to 399 (GSNSSKTGEILSESS). The span at 400–417 (MENDDEATEVTDEPMEQD) shows a compositional bias: acidic residues.

The protein belongs to the PPP4R2 family. As to quaternary structure, serine/threonine-protein phosphatase 4 (PP4) occurs in different assemblies of the catalytic and one or more regulatory subunits. Component of the PP4 complexes PPP4C-PPP4R2, PPP4C-PPP4R2-PPP4R3A and PPP4C-PPP4R2-PPP4R3B. The PPP4C-PPP4R2 complex appears to be a tetramer composed of 2 molecules of PPP4C and 2 molecules of PPP4R2. Interacts with DDX20/GEMIN3 and GEMIN4. Interacts with RPA2; this DNA damage-dependent interaction recruits PPP4C leading to RPA2 dephosphorylation. In terms of tissue distribution, widely expressed.

It localises to the cytoplasm. Its subcellular location is the cytoskeleton. The protein resides in the microtubule organizing center. It is found in the centrosome. The protein localises to the nucleus. Its function is as follows. Regulatory subunit of serine/threonine-protein phosphatase 4 (PP4). May regulate the activity of PPP4C at centrosomal microtubule organizing centers. Its interaction with the SMN complex leads to enhance the temporal localization of snRNPs, suggesting a role of PPP4C in maturation of spliceosomal snRNPs. The PPP4C-PPP4R2-PPP4R3A PP4 complex specifically dephosphorylates H2AX phosphorylated on 'Ser-140' (gamma-H2AX) generated during DNA replication and required for DNA double strand break repair. Mediates RPA2 dephosphorylation by recruiting PPP4C to RPA2 in a DNA damage-dependent manner. RPA2 dephosphorylation is required for the efficient RPA2-mediated recruitment of RAD51 to chromatin following double strand breaks, an essential step for DNA repair. This is Serine/threonine-protein phosphatase 4 regulatory subunit 2 (PPP4R2) from Homo sapiens (Human).